The primary structure comprises 112 residues: Large ribosomal subunit protein bL20c (112 aa).

Belongs to the bacterial ribosomal protein bL20 family.

It is found in the plastid. The protein localises to the chloroplast. Binds directly to 23S ribosomal RNA and is necessary for the in vitro assembly process of the 50S ribosomal subunit. It is not involved in the protein synthesizing functions of that subunit. This chain is Large ribosomal subunit protein bL20c (rpl20), found in Anthoceros angustus (Hornwort).